The following is a 311-amino-acid chain: Manganese-dependent ADP-ribose/CDP-alcohol diphosphatase (311 aa).

Zn(2+) is bound by residues Asp17, Gln19, Asp64, Asn99, His218, His255, and His257.

It belongs to the ADPRibase-Mn family. Monomer. The cofactor is Mg(2+).

It catalyses the reaction CDP-choline + H2O = phosphocholine + CMP + 2 H(+). The catalysed reaction is ADP-D-ribose + H2O = D-ribose 5-phosphate + AMP + 2 H(+). It carries out the reaction CDP-glycerol + H2O = sn-glycerol 3-phosphate + CMP + 2 H(+). Functionally, hydrolyzes ADP-ribose, IDP-ribose, CDP-glycerol, CDP-choline and CDP-ethanolamine, but not other non-reducing ADP-sugars or CDP-glucose. The chain is Manganese-dependent ADP-ribose/CDP-alcohol diphosphatase from Arabidopsis thaliana (Mouse-ear cress).